The primary structure comprises 514 residues: Na(+)/H(+) antiporter NhaB (514 aa).

11 consecutive transmembrane segments (helical) span residues Leu21–Ile41, Gly43–Leu63, Ile88–Met108, Phe143–Val163, Leu203–Pro223, Phe239–Phe259, Ala304–Ile324, Gln349–Ile369, Leu390–Ala410, Ala448–Ile468, and Ile484–Trp504.

It belongs to the NhaB Na(+)/H(+) (TC 2.A.34) antiporter family.

It is found in the cell inner membrane. The catalysed reaction is 2 Na(+)(in) + 3 H(+)(out) = 2 Na(+)(out) + 3 H(+)(in). In terms of biological role, na(+)/H(+) antiporter that extrudes sodium in exchange for external protons. The chain is Na(+)/H(+) antiporter NhaB from Haemophilus influenzae (strain ATCC 51907 / DSM 11121 / KW20 / Rd).